Reading from the N-terminus, the 410-residue chain is Platelet-activating factor acetylhydrolase IB subunit alpha (410 aa).

The segment at Met1 to Asp38 is required for self-association and interaction with PAFAH1B2 and PAFAH1B3. An interaction with NDE1 region spans residues Met1–Met66. The segment at Met1 to Tyr102 is interaction with NDEL1. The LisH domain occupies Gln7–Met39. Residue Lys53 is modified to N6-acetyllysine. Positions Thr56 to Gly82 form a coiled coil. The interaction with dynein and dynactin stretch occupies residues Gly83–Arg410. 7 WD repeats span residues Gly106–Lys147, Gly148–Thr187, Gly190–Thr229, Gly232–Glu271, Glu274–Thr333, Gly336–Asn377, and His379–Arg410. A Phosphoserine modification is found at Ser109. The interaction with DCX stretch occupies residues Tyr367 to Cys409. Residues Phe388–Arg410 are interaction with NDEL1.

The protein belongs to the WD repeat LIS1/nudF family. As to quaternary structure, can self-associate. Component of the cytosolic PAF-AH (I) heterotetrameric enzyme, which is composed of PAFAH1B1 (beta), PAFAH1B2 (alpha2) and PAFAH1B3 (alpha1) subunits. The catalytic activity of the enzyme resides in the alpha1 (PAFAH1B3) and alpha2 (PAFAH1B2) subunits, whereas the beta subunit (PAFAH1B1) has regulatory activity. Trimer formation is not essential for the catalytic activity. Interacts with the catalytic dimer of PAF-AH (I) heterotetrameric enzyme: interacts with PAFAH1B2 homodimer (alpha2/alpha2 homodimer), PAFAH1B3 homodimer (alpha1/alpha1 homodimer) and PAFAH1B2-PAFAH1B3 heterodimer (alpha2/alpha1 heterodimer). Interacts with DCX, dynein, dynactin, IQGAP1, KATNB1, NDE1, NDEL1, NUDC and RSN. Interacts with DISC1, and this interaction is enhanced by NDEL1. Interacts with DAB1 when DAB1 is phosphorylated in response to RELN/reelin signaling. Interacts with INTS13. Interacts with DCDC1.

The protein resides in the cytoplasm. The protein localises to the cytoskeleton. It is found in the microtubule organizing center. It localises to the centrosome. Its subcellular location is the spindle. The protein resides in the nucleus membrane. Functionally, regulatory subunit (beta subunit) of the cytosolic type I platelet-activating factor (PAF) acetylhydrolase (PAF-AH (I)), an enzyme that catalyzes the hydrolyze of the acetyl group at the sn-2 position of PAF and its analogs and participates in PAF inactivation. Regulates the PAF-AH (I) activity in a catalytic dimer composition-dependent manner. Positively regulates the activity of the minus-end directed microtubule motor protein dynein. May enhance dynein-mediated microtubule sliding by targeting dynein to the microtubule plus end. Required for several dynein- and microtubule-dependent processes such as the maintenance of Golgi integrity, the peripheral transport of microtubule fragments and the coupling of the nucleus and centrosome. Required during brain development for the proliferation of neuronal precursors and the migration of newly formed neurons from the ventricular/subventricular zone toward the cortical plate. Neuronal migration involves a process called nucleokinesis, whereby migrating cells extend an anterior process into which the nucleus subsequently translocates. During nucleokinesis dynein at the nuclear surface may translocate the nucleus towards the centrosome by exerting force on centrosomal microtubules. Also required for proper activation of Rho GTPases and actin polymerization at the leading edge of locomoting cerebellar neurons and postmigratory hippocampal neurons in response to calcium influx triggered via NMDA receptors. May also play a role in other forms of cell locomotion including the migration of fibroblasts during wound healing. Required for dynein recruitment to microtubule plus ends and BICD2-bound cargos. May modulate the Reelin pathway through interaction of the PAF-AH (I) catalytic dimer with VLDLR. The chain is Platelet-activating factor acetylhydrolase IB subunit alpha from Pan troglodytes (Chimpanzee).